An 88-amino-acid chain; its full sequence is Small ribosomal subunit protein uS15 (88 aa).

Over residues 1–20 (MLTTQDKQNIIKENQQSEGD) the composition is skewed to polar residues. A disordered region spans residues 1–24 (MLTTQDKQNIIKENQQSEGDTGSP).

The protein belongs to the universal ribosomal protein uS15 family. In terms of assembly, part of the 30S ribosomal subunit. Forms a bridge to the 50S subunit in the 70S ribosome, contacting the 23S rRNA.

In terms of biological role, one of the primary rRNA binding proteins, it binds directly to 16S rRNA where it helps nucleate assembly of the platform of the 30S subunit by binding and bridging several RNA helices of the 16S rRNA. Forms an intersubunit bridge (bridge B4) with the 23S rRNA of the 50S subunit in the ribosome. The polypeptide is Small ribosomal subunit protein uS15 (Francisella philomiragia subsp. philomiragia (strain ATCC 25017 / CCUG 19701 / FSC 153 / O#319-036)).